The sequence spans 423 residues: TNF receptor-associated factor family protein DDB_G0277243 (423 aa).

The RING-type; degenerate zinc finger occupies 20–66; it reads CSICVDPVLNSLPLEQHQALSCKNGHLLCQACWGKQLALRKECCICK. TRAF-type zinc fingers lie at residues 124–179 and 180–237; these read SHLR…NDMP and THIE…CYLS. Positions 287-411 constitute an MATH domain; that stretch reads RYKGNWTIEN…DGKLTINIDV (125 aa).

Belongs to the TNF receptor-associated factor family. A subfamily.

The protein localises to the cytoplasm. Probable adapter protein and signal transducer that links members of the tumor necrosis factor receptor family to different signaling pathways by association with the receptor cytoplasmic domain and kinases. The chain is TNF receptor-associated factor family protein DDB_G0277243 from Dictyostelium discoideum (Social amoeba).